A 358-amino-acid polypeptide reads, in one-letter code: Putative glycylpeptide N-tetradecanoyltransferase (358 aa).

It belongs to the NMT family.

It catalyses the reaction N-terminal glycyl-[protein] + tetradecanoyl-CoA = N-tetradecanoylglycyl-[protein] + CoA + H(+). In terms of biological role, adds a myristoyl group to the N-terminal glycine residue of certain proteins. This chain is Putative glycylpeptide N-tetradecanoyltransferase, found in Acanthamoeba polyphaga (Amoeba).